The chain runs to 257 residues: UPF0758 protein Bcenmc03_2526 (257 aa).

Residues 1–53 form a disordered region; sequence MLSPCPILPSAECRDTADTPADPPGRVIPINRRRRRPGDWRPERPRERLLERG. Basic and acidic residues predominate over residues 37–51; it reads PGDWRPERPRERLLE. An MPN domain is found at 135 to 257; that stretch reads QIDSPGAVED…TFSFARAGWL (123 aa). Residues His-206, His-208, and Asp-219 each contribute to the Zn(2+) site. Positions 206–219 match the JAMM motif motif; the sequence is HNHPSGAVQPSAED.

It belongs to the UPF0758 family.

This Burkholderia orbicola (strain MC0-3) protein is UPF0758 protein Bcenmc03_2526.